Here is an 830-residue protein sequence, read N- to C-terminus: Post-transcriptional regulator MKT1 (830 aa).

Residue Lys4 forms a Glycyl lysine isopeptide (Lys-Gly) (interchain with G-Cter in ubiquitin) linkage. Positions 130-380 (RSRGWTQWNN…SPATTVTKNA (251 aa)) are interaction with PBP1. Residues 347–400 (DSEKNNKDGKKSNLSSPSSASSSASPATTVTKNASEKLTYEKSSTKEVRKPRDI) form a disordered region. Phosphoserine occurs at positions 358, 362, and 371. A compositionally biased stretch (low complexity) spans 361 to 373 (SSPSSASSSASPA). Over residues 380–400 (ASEKLTYEKSSTKEVRKPRDI) the composition is skewed to basic and acidic residues.

It belongs to the XPG/RAD2 endonuclease family. In terms of assembly, interacts (via C-terminus) with PBP1 (via C-terminus).

Its subcellular location is the cytoplasm. It localises to the cytosol. Its function is as follows. Involved in 3'-UTR mediated RNA regulation. Binds to RNA-binding and RNA regulatory proteins. Complexes with PAB1-binding protein to promote mRNA interactions with poly(A)-binding protein. Promotes mating-type switching in mother cells by positively regulating HO expression. The protein is Post-transcriptional regulator MKT1 (MKT1) of Saccharomyces cerevisiae (strain ATCC 204508 / S288c) (Baker's yeast).